The chain runs to 367 residues: Porin Omp2a (367 aa).

The N-terminal stretch at 1-22 (MNIKSLLLGSAAALVAASGAQA) is a signal peptide.

It belongs to the alphaproteobacteria porin family. As to quaternary structure, monomer.

It localises to the cell outer membrane. Its function is as follows. Forms passive diffusion pores that allow small molecular weight hydrophilic materials across the outer membrane. This chain is Porin Omp2a (omp2a), found in Brucella suis.